Here is a 319-residue protein sequence, read N- to C-terminus: Cobalamin biosynthesis protein CbiB (319 aa).

Transmembrane regions (helical) follow at residues 56-76 (VMWV…LALA), 82-102 (WFGW…RSLA), 153-173 (VDGI…LAMA), 204-224 (VANY…AGLC), and 296-316 (LMWV…CGLS).

It belongs to the CobD/CbiB family.

The protein resides in the cell membrane. The protein operates within cofactor biosynthesis; adenosylcobalamin biosynthesis. Converts cobyric acid to cobinamide by the addition of aminopropanol on the F carboxylic group. However, the true cosubstrate could be (R)-1-amino-2-propanol O-2-phosphate, leading to cobinamide phosphate. This chain is Cobalamin biosynthesis protein CbiB, found in Salmonella paratyphi B (strain ATCC BAA-1250 / SPB7).